Here is a 424-residue protein sequence, read N- to C-terminus: Riboflavin biosynthesis protein RibBA (424 aa).

A DHBP synthase region spans residues 1-206 (MVTCEAGIAS…VDDLITYRWT (206 aa)). D-ribulose 5-phosphate is bound by residues 32–33 (RE), Asp37, 145–149 (RPGHT), and Glu169. Residue Glu33 coordinates Mg(2+). Residue His148 participates in Mg(2+) binding. The segment at 207–424 (FDSLVEHVSS…YETVERTSCC (218 aa)) is GTP cyclohydrolase II. 257–261 (RVHSE) provides a ligand contact to GTP. Zn(2+) is bound by residues Cys262, Cys273, and Cys275. GTP contacts are provided by residues Gln278, 301 to 303 (EGR), and Thr323. Catalysis depends on Asp335, which acts as the Proton acceptor; for GTP cyclohydrolase activity. Arg337 acts as the Nucleophile; for GTP cyclohydrolase activity in catalysis. Thr358 and Lys363 together coordinate GTP.

This sequence in the N-terminal section; belongs to the DHBP synthase family. The protein in the C-terminal section; belongs to the GTP cyclohydrolase II family. Requires Mg(2+) as cofactor. It depends on Mn(2+) as a cofactor. The cofactor is Zn(2+).

It catalyses the reaction D-ribulose 5-phosphate = (2S)-2-hydroxy-3-oxobutyl phosphate + formate + H(+). It carries out the reaction GTP + 4 H2O = 2,5-diamino-6-hydroxy-4-(5-phosphoribosylamino)-pyrimidine + formate + 2 phosphate + 3 H(+). The protein operates within cofactor biosynthesis; riboflavin biosynthesis; 2-hydroxy-3-oxobutyl phosphate from D-ribulose 5-phosphate: step 1/1. Its pathway is cofactor biosynthesis; riboflavin biosynthesis; 5-amino-6-(D-ribitylamino)uracil from GTP: step 1/4. In terms of biological role, catalyzes the conversion of D-ribulose 5-phosphate to formate and 3,4-dihydroxy-2-butanone 4-phosphate. Its function is as follows. Catalyzes the conversion of GTP to 2,5-diamino-6-ribosylamino-4(3H)-pyrimidinone 5'-phosphate (DARP), formate and pyrophosphate. This is Riboflavin biosynthesis protein RibBA from Chlamydia muridarum (strain MoPn / Nigg).